Here is a 598-residue protein sequence, read N- to C-terminus: MLKTHSCALTQENVGTEVTLAGWVHRRRDHGGVIFIDLRDREGIVQVVFNPEQSAACLDIGKELRSEYVLQVKGVVSHRPAGTENNRMPSGMVEVVAVHAKILNAAKTPPFYINEEVEVDESLRLKYRYLDIRRQGMKNNLIIRHKAVRFMREFLNDQGFIEIETPILIKSTPEGARDYLVPSRLFPGKFFALPQSPQQLKQLLMVAGMEKYYQVARCFRDEDLRADRQPEFTQLDMEMSFVDEEDMMKLMEDLFTGLVANVRPDMKYNKKFPRISFADATEKYGCDKPDLRFGMELADITDIGASSAFGVFKNVAAQGGAIKAISAPGCGGYNKSQQEELINLAKKYGAAGLVPISLGVENGELKDLTMEMVKSVAAKYLALEEIKTIAERSGAKPGDLILIVAGARKMVNTVLGEMRNQLAVKLNLCDKNELSFAFVVDFPLFQWDEEGKRWDSVHHPFTAPLESDMPLMDTDPGRVGSRAYDVVCNGYEIAGGSIRIHQADLQRKVFHLLGYNDEQIDERFGHLLEAFEFGAPPHGGVAPGIDRFVMLLAGETSIREVISFPKNQAAQDLLFGAPSVVDDKQIRDLHIRIQAEKE.

Residue E174 participates in L-aspartate binding. An aspartate region spans residues 198 to 201; sequence QQLK. R220 is a binding site for L-aspartate. ATP contacts are provided by residues 220 to 222 and Q229; that span reads RDE. Residue H458 coordinates L-aspartate. E492 is a binding site for ATP. Position 499 (R499) interacts with L-aspartate. 544 to 547 serves as a coordination point for ATP; it reads GIDR.

The protein belongs to the class-II aminoacyl-tRNA synthetase family. Type 1 subfamily. In terms of assembly, homodimer.

It localises to the cytoplasm. The catalysed reaction is tRNA(Asx) + L-aspartate + ATP = L-aspartyl-tRNA(Asx) + AMP + diphosphate. Aspartyl-tRNA synthetase with relaxed tRNA specificity since it is able to aspartylate not only its cognate tRNA(Asp) but also tRNA(Asn). Reaction proceeds in two steps: L-aspartate is first activated by ATP to form Asp-AMP and then transferred to the acceptor end of tRNA(Asp/Asn). The sequence is that of Aspartate--tRNA(Asp/Asn) ligase from Dehalococcoides mccartyi (strain ATCC BAA-2100 / JCM 16839 / KCTC 5957 / BAV1).